Here is a 347-residue protein sequence, read N- to C-terminus: Palmitoyltransferase ZDHHC19 (347 aa).

The next 2 membrane-spanning stretches (helical) occupy residues 29-49 (VFAA…FGFP) and 59-79 (WAFP…LVSL). A DHHC domain is found at 112-162 (EWCPKCLFHRPPRTYHCPWCNICVEDFDHHCKWVNNCIGHRNFRLFMLLVL). Catalysis depends on cysteine 142, which acts as the S-palmitoyl cysteine intermediate. The next 2 helical transmembrane spans lie at 156-176 (LFML…VTCL) and 194-214 (AILV…LLLI). The tract at residues 275 to 347 (IQEKTKPSPP…PTAEPAAGDP (73 aa)) is disordered.

It belongs to the DHHC palmitoyltransferase family.

Its subcellular location is the golgi apparatus membrane. The protein resides in the cytoplasm. The protein localises to the perinuclear region. It catalyses the reaction L-cysteinyl-[protein] + hexadecanoyl-CoA = S-hexadecanoyl-L-cysteinyl-[protein] + CoA. Its function is as follows. Palmitoyltransferase that mediates palmitoylation oproteins, such as RRAS and SQSTM1. Catalyzes palmitoylation of RRAS, leading to increased cell viability. Acts as a positive regulator of autophagy by mediating palmitoylation of SQSTM1, promoting affinity between SQSTM1 and ATG8 proteins and recruitment of ubiquitinated cargo proteins to autophagosomes. This is Palmitoyltransferase ZDHHC19 (Zdhhc19) from Mus musculus (Mouse).